Reading from the N-terminus, the 419-residue chain is Phosphoglycerate kinase (419 aa).

Residues 21 to 23 (DFN), R36, 60 to 63 (HLGD), R137, and R174 contribute to the substrate site. ATP contacts are provided by residues K225, G316, E347, and 376 to 379 (GGDS).

It belongs to the phosphoglycerate kinase family. As to quaternary structure, monomer.

The protein resides in the cytoplasm. The catalysed reaction is (2R)-3-phosphoglycerate + ATP = (2R)-3-phospho-glyceroyl phosphate + ADP. It participates in carbohydrate degradation; glycolysis; pyruvate from D-glyceraldehyde 3-phosphate: step 2/5. This is Phosphoglycerate kinase (pgk) from Treponema pallidum (strain Nichols).